The sequence spans 252 residues: MPRYKLVIEYDGGPFCGWQRQADDPTVQAAIETAVTRFSGETARLTCAGRTDAGVHAIHQVAHLDLARDWRTDTVRDALNAHLRPQPIAIVSAEVVTHDFDARHSAIRRHYRYRILNRRSPAALTRAHVWHVPWPLDADLMHAAAQRLLGRHDFSAFRAAECQAASPVRTLEQLDVTRQRMGLFEEIVIATSARSFLHHQVRAMAGTLMLAGCRRLSADDVAEILATKAKHRCGPLAPACGLTFVGVDYDEK.

Aspartate 52 serves as the catalytic Nucleophile. Tyrosine 111 serves as a coordination point for substrate.

This sequence belongs to the tRNA pseudouridine synthase TruA family. In terms of assembly, homodimer.

It carries out the reaction uridine(38/39/40) in tRNA = pseudouridine(38/39/40) in tRNA. Functionally, formation of pseudouridine at positions 38, 39 and 40 in the anticodon stem and loop of transfer RNAs. This Methylorubrum populi (strain ATCC BAA-705 / NCIMB 13946 / BJ001) (Methylobacterium populi) protein is tRNA pseudouridine synthase A.